We begin with the raw amino-acid sequence, 170 residues long: Transmembrane protein 252 (170 aa).

Transmembrane regions (helical) follow at residues 8-28 (ILCA…AFFI) and 40-60 (LIAA…GIFW). Residues 112–147 (CPAEREASGIPPPLYTETGLEFQDGNDSHPEAPPSY) form a disordered region.

The protein resides in the membrane. In Homo sapiens (Human), this protein is Transmembrane protein 252 (TMEM252).